The sequence spans 1726 residues: Protein NLRC5 (1726 aa).

In terms of domain architecture, NACHT spans 207–537; sequence RVVMLSGQAG…THLTIQEFMA (331 aa). 213-220 is an ATP binding site; it reads GQAGSGKT. LRR repeat units lie at residues 879 to 902, 904 to 925, 1002 to 1025, 1026 to 1048, 1103 to 1126, 1128 to 1155, 1212 to 1235, 1351 to 1374, 1387 to 1411, 1421 to 1443, 1447 to 1468, 1502 to 1525, 1532 to 1553, 1560 to 1580, 1588 to 1609, 1616 to 1637, 1642 to 1662, and 1670 to 1691; these read LTVLNLSHNALGNRGLKKLLEHLP, LDTIQEINVSDNGVDMDGVVLL, NLDFSHGTLKDESTEKLLKFLPNM, ASLNLLNLSHIQMSTDSALLLVQ, CHHLTDLDLSSNFLKDEDVKTFVQ, LPKLQISGSVSLNNNNLTEVGVLYLLSL, LNSVQTLELRNNSFSADTIKYLIT, AEFLSSVLPSLKNLKILSLSSKGE, AQKHLEQLSLAHHVIKDRGAAVLGN, SLSLLKCLDWTATGGRDLVRGLV, SLEEIRLDSIELDEESIDCFAQ, LIELEEIELIGLRMGDRGVEELVK, RLRKINLSENRVSDHAGEMLVK, ALQQIHLFRNNLGHSSAAVLG, ELTELDLSENQMESKGCSSVCE, ALKKLHLTSIGTSDLVNVASCL, SIEDISLSWNNCENDVVLKLA, and KLKRLDLEANNINTSGAMALAT.

Belongs to the NLRP family.

The protein localises to the cytoplasm. Functionally, probable regulator of the NF-kappa-B and type I interferon signaling pathways. May also regulate the type II interferon signaling pathway. Plays a role in homeostatic control of innate immunity and in antiviral defense mechanisms. This is Protein NLRC5 (nlrc5) from Ictalurus punctatus (Channel catfish).